Here is a 448-residue protein sequence, read N- to C-terminus: Exoglucanase GH7B (448 aa).

An N-terminal signal peptide occupies residues 1–17 (MSLAVVFLLGFLAVSHG). Q18 carries the post-translational modification Pyrrolidone carboxylic acid. Intrachain disulfides connect C62–C83 and C73–C79. Residues Y97, 119 to 120 (DI), and K197 each bind substrate. Intrachain disulfides connect C154-C415, C188-C226, C192-C225, C246-C271, C254-C259, and C276-C350. Catalysis depends on E228, which acts as the Nucleophile. Residues 230-233 (DIWE) and H244 contribute to the substrate site. E233 functions as the Proton donor/acceptor in the catalytic mechanism. Residues R266 and D274 each contribute to the substrate site. 2 residues coordinate substrate: W396 and R412.

This sequence belongs to the glycosyl hydrolase 7 (cellulase C) family. As to quaternary structure, monomer. Highly expressed in the hepatopancreas (at protein level). Little or no expression detected in the hindgut or the rest of the body (at protein level).

It localises to the secreted. The enzyme catalyses Hydrolysis of (1-&gt;4)-beta-D-glucosidic linkages in cellulose and cellotetraose, releasing cellobiose from the non-reducing ends of the chains.. Functionally, exocellobiohydrolase (CBH) that catalyzes the hydrolysis of 1,4-beta-D-glucosidic bonds in cellulose to release the disaccharide cellobiose. The degradation of cellulose involves an interplay between different cellulolytic enzymes. Hydrolysis starts with endoglucanases (EGs), which cut internal beta-1,4-glucosidic bonds in cellulose to reduce the polymerization degree of the substrate and create new chain ends for exocellobiohydrolases (CBHs). The CBHs release the disaccharide cellobiose from the non-reducing end of the cellulose polymer chain. Finally, beta-1,4-glucosidases hydrolyze the cellobiose and other short cello-oligosaccharides into glucose units. The polypeptide is Exoglucanase GH7B (Limnoria quadripunctata (Gribble)).